A 438-amino-acid polypeptide reads, in one-letter code: Anaerobic glycerol-3-phosphate dehydrogenase subunit B (438 aa).

It belongs to the anaerobic G-3-P dehydrogenase subunit B family. Composed of a catalytic GlpA/B dimer and of membrane bound GlpC. FMN is required as a cofactor.

The enzyme catalyses a quinone + sn-glycerol 3-phosphate = dihydroxyacetone phosphate + a quinol. It functions in the pathway polyol metabolism; glycerol degradation via glycerol kinase pathway; glycerone phosphate from sn-glycerol 3-phosphate (anaerobic route): step 1/1. Conversion of glycerol 3-phosphate to dihydroxyacetone. Uses fumarate or nitrate as electron acceptor. This is Anaerobic glycerol-3-phosphate dehydrogenase subunit B from Vibrio vulnificus (strain YJ016).